Here is a 238-residue protein sequence, read N- to C-terminus: Large ribosomal subunit protein uL2 (238 aa).

The interval 197 to 219 (ASDHPFGGKRHSNHSKPFTVSKW) is disordered.

The protein belongs to the universal ribosomal protein uL2 family. Part of the 50S ribosomal subunit. Forms a bridge to the 30S subunit in the 70S ribosome.

Functionally, one of the primary rRNA binding proteins. Required for association of the 30S and 50S subunits to form the 70S ribosome, for tRNA binding and peptide bond formation. It has been suggested to have peptidyltransferase activity; this is somewhat controversial. Makes several contacts with the 16S rRNA in the 70S ribosome. The protein is Large ribosomal subunit protein uL2 of Nanoarchaeum equitans (strain Kin4-M).